A 373-amino-acid polypeptide reads, in one-letter code: 3-dehydroquinate synthase (373 aa).

NAD(+)-binding positions include 67 to 72 (EGEETK), 101 to 105 (GVILD), 125 to 126 (TT), Lys-138, and Lys-147. Zn(2+) is bound by residues Glu-180, His-240, and His-256.

It belongs to the sugar phosphate cyclases superfamily. Dehydroquinate synthase family. NAD(+) is required as a cofactor. Requires Co(2+) as cofactor. Zn(2+) serves as cofactor.

Its subcellular location is the cytoplasm. It catalyses the reaction 7-phospho-2-dehydro-3-deoxy-D-arabino-heptonate = 3-dehydroquinate + phosphate. Its pathway is metabolic intermediate biosynthesis; chorismate biosynthesis; chorismate from D-erythrose 4-phosphate and phosphoenolpyruvate: step 2/7. In terms of biological role, catalyzes the conversion of 3-deoxy-D-arabino-heptulosonate 7-phosphate (DAHP) to dehydroquinate (DHQ). The chain is 3-dehydroquinate synthase from Chlamydia trachomatis serovar A (strain ATCC VR-571B / DSM 19440 / HAR-13).